Here is a 434-residue protein sequence, read N- to C-terminus: Na(+)/H(+) antiporter NhaA 1 (434 aa).

A run of 11 helical transmembrane segments spans residues 34–54, 73–93, 111–131, 141–161, 171–191, 194–214, 233–253, 278–298, 313–333, 346–366, and 380–400; these read GLLLIAAATVAIVWANTPWSA, LTLGAWAADGLLAIFFFVAGL, ALPVVAAMGGMAVPALVYVLW, GWAIPTATDIAFAVAILAVIS, FLLTLAVVDDLLAITIIALFY, ELHLGYLAAAAVPLLVFALLV, VLVHESGVHATVAGVLLGFAV, SAGLAVPVFAFFAAGVTVGGF, VVTGLVVGKTVGIAGSTWLLA, WVDVVGLAMLAGIGFTVSLLI, and HVKVGVLVGSLAATALATGVL.

It belongs to the NhaA Na(+)/H(+) (TC 2.A.33) antiporter family.

Its subcellular location is the cell membrane. It catalyses the reaction Na(+)(in) + 2 H(+)(out) = Na(+)(out) + 2 H(+)(in). Functionally, na(+)/H(+) antiporter that extrudes sodium in exchange for external protons. The sequence is that of Na(+)/H(+) antiporter NhaA 1 from Nocardioides sp. (strain ATCC BAA-499 / JS614).